Here is an 80-residue protein sequence, read N- to C-terminus: Acyl carrier protein (80 aa).

In terms of domain architecture, Carrier spans 4–79 (NSIEEKVRSI…DVVAYIEKVQ (76 aa)). Serine 39 carries the post-translational modification O-(pantetheine 4'-phosphoryl)serine.

It belongs to the acyl carrier protein (ACP) family. In terms of processing, 4'-phosphopantetheine is transferred from CoA to a specific serine of apo-ACP by AcpS. This modification is essential for activity because fatty acids are bound in thioester linkage to the sulfhydryl of the prosthetic group.

It is found in the cytoplasm. It functions in the pathway lipid metabolism; fatty acid biosynthesis. Its function is as follows. Carrier of the growing fatty acid chain in fatty acid biosynthesis. The protein is Acyl carrier protein of Akkermansia muciniphila (strain ATCC BAA-835 / DSM 22959 / JCM 33894 / BCRC 81048 / CCUG 64013 / CIP 107961 / Muc).